The following is a 303-amino-acid chain: ATP synthase subunit a (303 aa).

6 consecutive transmembrane segments (helical) span residues 59 to 79 (HTVM…IWGN), 122 to 142 (FLLT…VPWM), 148 to 168 (NLAV…VAGI), 181 to 201 (TGGV…LGLF), 220 to 240 (IVYF…VAAV), and 244 to 264 (FAFA…YVFA). Residues 281–290 (HDDHGHDHPE) show a composition bias toward basic and acidic residues. Residues 281-303 (HDDHGHDHPEAGPSHDQGKAHHA) are disordered.

The protein belongs to the ATPase A chain family. In terms of assembly, F-type ATPases have 2 components, CF(1) - the catalytic core - and CF(0) - the membrane proton channel. CF(1) has five subunits: alpha(3), beta(3), gamma(1), delta(1), epsilon(1). CF(0) has three main subunits: a(1), b(2) and c(9-12). The alpha and beta chains form an alternating ring which encloses part of the gamma chain. CF(1) is attached to CF(0) by a central stalk formed by the gamma and epsilon chains, while a peripheral stalk is formed by the delta and b chains.

Its subcellular location is the cell inner membrane. Key component of the proton channel; it plays a direct role in the translocation of protons across the membrane. The polypeptide is ATP synthase subunit a (Myxococcus xanthus (strain DK1622)).